Reading from the N-terminus, the 333-residue chain is Ferrochelatase (333 aa).

Residues H202 and E284 each coordinate Fe cation.

It belongs to the ferrochelatase family.

Its subcellular location is the cytoplasm. It catalyses the reaction heme b + 2 H(+) = protoporphyrin IX + Fe(2+). It participates in porphyrin-containing compound metabolism; protoheme biosynthesis; protoheme from protoporphyrin-IX: step 1/1. Its function is as follows. Catalyzes the ferrous insertion into protoporphyrin IX. This Francisella tularensis subsp. tularensis (strain FSC 198) protein is Ferrochelatase.